A 184-amino-acid chain; its full sequence is Photosystem I assembly protein Ycf4 (184 aa).

A run of 2 helical transmembrane segments spans residues 22–42 (FCWA…GTSS) and 57–77 (IIFF…LFIS).

This sequence belongs to the Ycf4 family.

Its subcellular location is the plastid. The protein localises to the chloroplast thylakoid membrane. Seems to be required for the assembly of the photosystem I complex. This chain is Photosystem I assembly protein Ycf4, found in Draba nemorosa (Woodland whitlowgrass).